We begin with the raw amino-acid sequence, 251 residues long: Prolactin-7C1 (251 aa).

The first 30 residues, 1-30, serve as a signal peptide directing secretion; the sequence is MLLSLTHPSFLAMLPMLLMSNLLQWEGVTS. A glycan (N-linked (GlcNAc...) asparagine) is linked at N57. Intrachain disulfides connect C101/C217 and C234/C242.

The protein belongs to the somatotropin/prolactin family. As to expression, expressed exclusively in the placenta. Expressed in spongiotrophoblast cells and trophoblast giant cells of the junctional zone and in labyrinthine trophoblast.

The protein localises to the secreted. This Mus musculus (Mouse) protein is Prolactin-7C1 (Prl7c1).